A 355-amino-acid polypeptide reads, in one-letter code: G protein alpha i subunit (355 aa).

The N-myristoyl glycine moiety is linked to residue glycine 2. Cysteine 3 is lipidated: S-palmitoyl cysteine. A G-alpha domain is found at 33–355; it reads SEVKLLLLGA…KNNLKQIGLF (323 aa). Residues 36–49 form a G1 motif region; sequence KLLLLGAGESGKST. GTP is bound by residues 41 to 48, 176 to 182, 201 to 205, 270 to 273, and alanine 327; these read GAGESGKS, LRTRVKT, DVGGQ, and NKKD. Positions 48 and 182 each coordinate Mg(2+). The segment at 174-182 is G2 motif; it reads DVLRTRVKT. The tract at residues 197 to 206 is G3 motif; sequence FKLFDVGGQR. The interval 266 to 273 is G4 motif; it reads ILFLNKKD. The interval 325-330 is G5 motif; it reads TCATDT.

This sequence belongs to the G-alpha family. G(i/o/t/z) subfamily. G proteins are composed of 3 units; alpha, beta and gamma. The alpha chain contains the guanine nucleotide binding site. Interacts (via GDP- or GTP-bound forms) with loco (via GoLoco and RGS domains). Interacts with raps/pins.

It localises to the cell membrane. The protein resides in the apical cell membrane. Functionally, guanine nucleotide-binding proteins (G proteins) are involved as modulators or transducers in various transmembrane signaling systems. Plays a role in glial cell differentiation during embryogenesis; loco, Galphao and the G-protein coupled receptor, moody, are required in the surface glia to achieve effective insulation of the nerve cord. This chain is G protein alpha i subunit (Galphai), found in Drosophila melanogaster (Fruit fly).